A 541-amino-acid chain; its full sequence is Protein wntless homolog (541 aa).

The N-terminal stretch at 1–42 is a signal peptide; that stretch reads MAGAIIENMSTRKLCIVGGILLVFQVIAFLVGGLIAPSPTTA. Residues 43–232 lie on the Lumenal side of the membrane; it reads VPYMSVKCID…GIHQNGGFTK (190 aa). Residues 233-253 form a helical membrane-spanning segment; the sequence is VWFAMKTFLTPSILIIMVWYW. At 254-268 the chain is on the cytoplasmic side; it reads RRITLMTRAPVLLEK. A helical membrane pass occupies residues 269-289; it reads VIFALGISMTFINIPVEWFSI. Over 290–303 the chain is Lumenal; sequence GFDWTWMLLFGDIR. A helical transmembrane segment spans residues 304-324; the sequence is QGIFYAMLLSFWIIFCGEHMM. Topologically, residues 325 to 331 are cytoplasmic; that stretch reads DQNERNR. The chain crosses the membrane as a helical span at residues 332–352; the sequence is LSGYWKQVGPIAVGSFCLFIF. The Lumenal segment spans residues 353-380; that stretch reads DMCERGVQLKNPFYSIWTTEVGTELAMA. A helical transmembrane segment spans residues 381–401; the sequence is FIIVAGICLCLYFLFLCFMVF. Over 402-431 the chain is Cytoplasmic; it reads QVFRNISGKQSSLPAMSKARRLHYEGLIFR. Residues 432–452 form a helical membrane-spanning segment; that stretch reads FKFLMLITLACAAMTVIFFIV. Residues 453-471 lie on the Lumenal side of the membrane; that stretch reads SQVTEGHWKWGDITIQVNS. A helical membrane pass occupies residues 472 to 492; sequence AFFTGIYGMWNLYVFALMFLY. Over 493 to 541 the chain is Cytoplasmic; it reads APSHKNYGEDQSNGDLGVSSGEELQLTTTITHVDGPTEVYKLARKEAQE.

The protein belongs to the wntless family.

Its subcellular location is the golgi apparatus membrane. The protein resides in the cytoplasmic vesicle membrane. Functionally, may play an essential role in Wnt signaling pathway. May be required for Wnt-dependent patterning processes. The chain is Protein wntless homolog (WLS) from Gallus gallus (Chicken).